The following is a 187-amino-acid chain: UPF0301 protein CKO_04323 (187 aa).

It belongs to the UPF0301 (AlgH) family.

The protein is UPF0301 protein CKO_04323 of Citrobacter koseri (strain ATCC BAA-895 / CDC 4225-83 / SGSC4696).